The sequence spans 544 residues: Matrilin-1 (544 aa).

The signal sequence occupies residues 1 to 26 (MRALSGPRLMLCGLLLLLFQAPCALG). Residues 42–217 (DLVFVVDSSR…SVIEKLSKKF (176 aa)) form the VWFA 1 domain. N-linked (GlcNAc...) asparagine glycosylation occurs at asparagine 77. One can recognise an EGF-like domain in the interval 224–264 (VSDLCATGDHDCEQVCVSSPGSYTCACREGFTLNSDGKTCN). 3 disulfides stabilise this stretch: cysteine 228–cysteine 239, cysteine 235–cysteine 248, and cysteine 250–cysteine 263. The VWFA 2 domain maps to 276 to 448 (DLVFLIDGSK…KTINQIGKKL (173 aa)). Residue asparagine 345 is glycosylated (N-linked (GlcNAc...) asparagine).

In terms of assembly, homotrimer. Part of a complex composed of MATN1 (via VWFA1 domain), type 2 collagens and type 6 collagens. Forms a complex (via covalent bonds) with ACAN; the interaction increases in abundance with increasing age of the organism via an increase in occupancy of MATN1 binding sites. Interacts with COMP. In terms of processing, N-glycosylated; reduces binding affinity for type 2 collagens. Expressed in trachea from fetus into adulthood (at protein level).

It localises to the secreted. The protein localises to the extracellular space. The protein resides in the extracellular matrix. A major component of the extracellular matrix of non-articular cartilage. Binds to type 2 collagens and forms long concatenated protein networks as part of the extracellular matrix. Required for the network-like organization and bundling of collagen fibrils surrounding chondrocytes in the zones of maturation and hypertrophy. Required for mechanotransduction and adaption to mechanical loading in cartilage chondrocytes, resulting in an increase in expression of the extracellular matrix components ACAN and COL2A1. Acts as a moderator of angiogenesis in response to injury. This is Matrilin-1 from Bos taurus (Bovine).